Consider the following 353-residue polypeptide: Phosphoribosylformylglycinamidine cyclo-ligase (353 aa).

This sequence belongs to the AIR synthase family.

Its subcellular location is the cytoplasm. It carries out the reaction 2-formamido-N(1)-(5-O-phospho-beta-D-ribosyl)acetamidine + ATP = 5-amino-1-(5-phospho-beta-D-ribosyl)imidazole + ADP + phosphate + H(+). It functions in the pathway purine metabolism; IMP biosynthesis via de novo pathway; 5-amino-1-(5-phospho-D-ribosyl)imidazole from N(2)-formyl-N(1)-(5-phospho-D-ribosyl)glycinamide: step 2/2. The sequence is that of Phosphoribosylformylglycinamidine cyclo-ligase from Pseudomonas aeruginosa (strain ATCC 15692 / DSM 22644 / CIP 104116 / JCM 14847 / LMG 12228 / 1C / PRS 101 / PAO1).